Here is a 424-residue protein sequence, read N- to C-terminus: Myb family transcription factor RLI1 (424 aa).

The tract at residues 144–165 (RPQKRDSGERTPLPPPSQQQHQ) is disordered. An HTH myb-type domain is found at 238–298 (APSKTRIRWT…HLQKYRIAKY (61 aa)). Positions 269–294 (PKGILKLMNSDGLTIYHIKSHLQKYR) form a DNA-binding region, H-T-H motif. Residues 326-391 (MQITEALRVQ…ELDDVVAFAA (66 aa)) are a coiled coil. The LHEQLE motif lies at 342-347 (LHEQLE).

This sequence belongs to the MYB-CC family. Interacts with SPX1 and SPX2 in the nucleus; these interactions prevent binding to the promoters of target genes, thus regulating negatively leaf inclination in response to phosphate (Pi) starvation. As to quaternary structure, homodimer. Interacts with PHR2 in the nucleus. As to expression, mostly expressed in roots and leaves blades and, to a lower extent, in leaves sheaths, culms and panicles. Localized in leaves lamina joints. In terms of tissue distribution, expressed equally in shoots and roots. Mostly expressed in shoots and, to a lower extent, in roots.

Its subcellular location is the nucleus. Transcription factor binding to specific DNA sequences of target genes promoters, such as the motif R1BS 5'-NAKATNCN-3' and the motif P1BS 5'-GNATATNC-3' to trigger their expression. Nitrate-induced component involved in modulating phosphate (Pi) response and homeostasis together with PHR2; activates directly the expression of Pi starvation-induced (PSI) genes upon nitrate disponibility, thus triggering the nitrate-induced phosphate response (NIPR) promoting Pi uptake activity. Its function is as follows. Binds preferentially to the P1BS motif 5'-GNATATNC-3' in target genes promoters. In terms of biological role, binds preferentially to the R1BS motif 5'-NAKATNCN-3' in target genes promoters, including several genes involved in the plant hormone signal transduction pathway. Involved in the shoot architecture; positively regulates leaf inclination by affecting lamina joint cell elongation via the direct promotion of ILI4/BU1 and BC1 genes expression, especially in response to phosphate (Pi) availability. Regulates both brassinolide (BL) biosynthesis and signaling by directly activating BL-biosynthesis and signaling genes. This Oryza sativa subsp. japonica (Rice) protein is Myb family transcription factor RLI1.